The chain runs to 322 residues: Corticotropin-releasing factor-binding protein (322 aa).

The first 24 residues, 1–24, serve as a signal peptide directing secretion; it reads MSPNFKLQCHFILILLTALRGESR. 5 disulfides stabilise this stretch: cysteine 60-cysteine 81, cysteine 104-cysteine 141, cysteine 183-cysteine 205, cysteine 237-cysteine 264, and cysteine 277-cysteine 318. N-linked (GlcNAc...) asparagine glycosylation is present at asparagine 204.

Belongs to the CRF-binding protein family.

It localises to the secreted. Binds CRF and inactivates it. May prevent inappropriate pituitary-adrenal stimulation in pregnancy. This Mus musculus (Mouse) protein is Corticotropin-releasing factor-binding protein (Crhbp).